The chain runs to 376 residues: MASYPCHQHASAFDQAARSRGHSNRRTALRPRRQQEATEVRLEQKMPTLLRVYIDGPHGMGKTTTTQLLVALGSRDDIVYVPEPMTYWQVLGASETIANIYTTQHRLDQGEISAGDAAVVMTSAQITMGMPYAVTDAVLAPHVGGEAGSSHAPPPALTLIFDRHPIAALLCYPAARYLMGSMTPQAVLAFVALIPPTLPGTNIVLGALPEDRHIDRLAKRQRPGERLDLAMLAAIRRVYGLLANTVRYLQGGGSWWEDWGQLSGTAVPPQGAEPQSNAGPRPHIGDTLFTLFRAPELLAPNGDLYNVFAWALDVLAKRLRPMHVFILDYDQSPAGCRDALLQLTSGMVQTHVTTPGSIPTICDLARTFAREMGEAN.

A disordered region spans residues 1–39 (MASYPCHQHASAFDQAARSRGHSNRRTALRPRRQQEATE). Residues 19-32 (SRGHSNRRTALRPR) show a composition bias toward basic residues. An ATP-binding site is contributed by 56–63 (GPHGMGKT). Glu83 (proton acceptor) is an active-site residue. Substrate contacts are provided by Tyr101 and Gln125. Arg216 serves as a coordination point for ATP. Arg222 serves as a coordination point for substrate.

This sequence belongs to the herpesviridae thymidine kinase family. In terms of assembly, homodimer.

The enzyme catalyses thymidine + ATP = dTMP + ADP + H(+). Catalyzes the transfer of the gamma-phospho group of ATP to thymidine to generate dTMP in the salvage pathway of pyrimidine synthesis. The dTMP serves as a substrate for DNA polymerase during viral DNA replication. Allows the virus to be reactivated and to grow in non-proliferative cells lacking a high concentration of phosphorylated nucleic acid precursors. The polypeptide is Thymidine kinase (Human herpesvirus 1 (strain CL101) (HHV-1)).